The following is a 225-amino-acid chain: 7-cyano-7-deazaguanine synthase (225 aa).

7–17 serves as a coordination point for ATP; that stretch reads LSGGMDSTTLL. Zn(2+)-binding residues include cysteine 183, cysteine 191, cysteine 194, and cysteine 197.

The protein belongs to the QueC family. In terms of assembly, homodimer. It depends on Zn(2+) as a cofactor.

It catalyses the reaction 7-carboxy-7-deazaguanine + NH4(+) + ATP = 7-cyano-7-deazaguanine + ADP + phosphate + H2O + H(+). It participates in purine metabolism; 7-cyano-7-deazaguanine biosynthesis. Catalyzes the ATP-dependent conversion of 7-carboxy-7-deazaguanine (CDG) to 7-cyano-7-deazaguanine (preQ(0)). In Caldicellulosiruptor saccharolyticus (strain ATCC 43494 / DSM 8903 / Tp8T 6331), this protein is 7-cyano-7-deazaguanine synthase.